Here is a 364-residue protein sequence, read N- to C-terminus: B3 domain-containing protein At5g38490 (364 aa).

The tract at residues 148–202 is disordered; sequence ASTSSSSLLNLPCLEPSTETKDVPNPNYQSSSPSSCLTGKTNRKRRAVEQRKSGK. A DNA-binding region (TF-B3) is located at residues 260–364; sequence FQKLIRNDFL…GVLCFALDTE (105 aa).

Its subcellular location is the nucleus. This chain is B3 domain-containing protein At5g38490, found in Arabidopsis thaliana (Mouse-ear cress).